Reading from the N-terminus, the 664-residue chain is Translation factor guf1, mitochondrial (664 aa).

The N-terminal 43 residues, 1-43 (MRGCLQLARWLSAAPKGTAASLTRAPFGLANATRFFTNSAARA), are a transit peptide targeting the mitochondrion. The tr-type G domain maps to 66–246 (ERYRNFCIVA…TVVDKIPAPI (181 aa)). GTP contacts are provided by residues 75 to 82 (AHVDHGKS), 139 to 143 (DTPGH), and 193 to 196 (NKVD).

The protein belongs to the TRAFAC class translation factor GTPase superfamily. Classic translation factor GTPase family. LepA subfamily.

The protein localises to the mitochondrion inner membrane. It carries out the reaction GTP + H2O = GDP + phosphate + H(+). Functionally, promotes mitochondrial protein synthesis. May act as a fidelity factor of the translation reaction, by catalyzing a one-codon backward translocation of tRNAs on improperly translocated ribosomes. Binds to mitochondrial ribosomes in a GTP-dependent manner. This is Translation factor guf1, mitochondrial (guf1) from Aspergillus clavatus (strain ATCC 1007 / CBS 513.65 / DSM 816 / NCTC 3887 / NRRL 1 / QM 1276 / 107).